A 93-amino-acid chain; its full sequence is MKENYNYPLDLSWSTTEMTEVLSFFNQVEKFYESKVEKEVFLESYNAFKKIVPSKMQEKQLGRDFELSSGYSLYHAVKEVKASGKRFVSADKA.

Belongs to the UPF0223 family.

In Lactococcus lactis subsp. lactis (strain IL1403) (Streptococcus lactis), this protein is UPF0223 protein YfdD (yfdD).